The sequence spans 329 residues: 4-hydroxythreonine-4-phosphate dehydrogenase (329 aa).

The substrate site is built by histidine 136 and threonine 137. The a divalent metal cation site is built by histidine 166, histidine 211, and histidine 266. Positions 274, 283, and 292 each coordinate substrate.

The protein belongs to the PdxA family. As to quaternary structure, homodimer. It depends on Zn(2+) as a cofactor. Mg(2+) is required as a cofactor. Requires Co(2+) as cofactor.

It localises to the cytoplasm. It carries out the reaction 4-(phosphooxy)-L-threonine + NAD(+) = 3-amino-2-oxopropyl phosphate + CO2 + NADH. It participates in cofactor biosynthesis; pyridoxine 5'-phosphate biosynthesis; pyridoxine 5'-phosphate from D-erythrose 4-phosphate: step 4/5. Its function is as follows. Catalyzes the NAD(P)-dependent oxidation of 4-(phosphooxy)-L-threonine (HTP) into 2-amino-3-oxo-4-(phosphooxy)butyric acid which spontaneously decarboxylates to form 3-amino-2-oxopropyl phosphate (AHAP). The polypeptide is 4-hydroxythreonine-4-phosphate dehydrogenase (Shigella dysenteriae serotype 1 (strain Sd197)).